We begin with the raw amino-acid sequence, 777 residues long: Reticulon-1 (777 aa).

Disordered stretches follow at residues Met1–Ser77, Asn129–Asp182, Thr198–Gly245, and Ala293–Pro573. Ser13 and Ser68 each carry phosphoserine. Positions Arg199–Gly233 are enriched in basic and acidic residues. Phosphoserine occurs at positions 210, 241, and 325. The span at Pro326–Ser339 shows a compositional bias: low complexity. A phosphoserine mark is found at Ser348 and Ser350. Residues Ile393–Ser406 show a composition bias toward polar residues. Ser485 is subject to Phosphoserine. A compositionally biased stretch (basic and acidic residues) spans Ala495–Pro510. Positions Thr525–Glu534 are enriched in polar residues. Positions Ala590 to Glu777 constitute a Reticulon domain. The next 2 helical transmembrane spans lie at Ile604–Val624 and Phe706–Leu726.

In terms of assembly, interacts with NDRG1. Interacts with BACE1. Interacts with TMEM33. As to quaternary structure, interacts with UGCG; regulates the ceramide glucosyltransferase activity of UGCG. As to expression, expressed predominantly in central and peripheral nervous system of newborn and adult rats. Low levels have been also detected in heart, adrenal gland and spleen. Expression of isoform RTN1-B is restricted to particular neuronal types.

Its subcellular location is the endoplasmic reticulum membrane. The protein resides in the golgi apparatus membrane. Inhibits amyloid precursor protein processing, probably by blocking BACE1 activity. This is Reticulon-1 (Rtn1) from Rattus norvegicus (Rat).